The following is a 485-amino-acid chain: Calcium/manganese antiporter SLC30A10 (485 aa).

The Cytoplasmic portion of the chain corresponds to 1 to 10 (MGRYSGKTCR). The chain crosses the membrane as a helical span at residues 11-31 (LLFMLVLTVAFFVAELVSGYL). Topologically, residues 32-40 (GNSIALLSD) are extracellular. Residues 41 to 61 (SFNMLSDLISLCVGLSAGYIA) traverse the membrane as a helical segment. Residues 62–81 (RRPTRGFSATYGYARAEVVG) are Cytoplasmic-facing. A helical membrane pass occupies residues 82–102 (ALSNAVFLTALCFTIFVEAVL). Residues 103–113 (RLARPERIDDP) lie on the Extracellular side of the membrane. A helical membrane pass occupies residues 114-134 (ELVLIVGVLGLLVNVVGLLIF). The Cytoplasmic portion of the chain corresponds to 135 to 244 (QDCAAWFACC…ALNIRGVLLH (110 aa)). Residues 167-196 (FGGPQGAEDPRRAADPTAPGSDSAVTLRGT) are disordered. Residues 245–265 (VMGDALGSVVVVITAIIFYVL) form a helical membrane-spanning segment. The Extracellular portion of the chain corresponds to 266–278 (PLKSEDPCNWQCY). The helical transmembrane segment at 279–299 (IDPSLTVLMVIIILSSAFPLI) threads the bilayer. Topologically, residues 300–485 (KETAAILLQM…DQCYVNRTHF (186 aa)) are cytoplasmic. Positions 308 to 485 (QMVPKGVNME…DQCYVNRTHF (178 aa)) are required for plasma membrane localization.

This sequence belongs to the cation diffusion facilitator (CDF) transporter (TC 2.A.4) family. SLC30A subfamily. Forms homodimers. Forms heterodimers and high-molecular weight oligomers with SLC30A3, SLC30A2 and SLC30A4; heterodimerization is mediated by covalent-bound tyrosine residues, occurs probably in a tissue-specific manner and could mediate the intracellular zinc transport activity into early endosomes and recycling endosomes. In terms of tissue distribution, specifically expressed in fetal liver and fetal brain. Expressed in adult tissues with relative levels small intestine &gt; liver &gt; testes &gt; brain &gt; ovary &gt; colon &gt; cervix &gt; prostate &gt; placenta. Expressed in liver and neurons of the nervous system (at protein level).

It is found in the cell membrane. The protein resides in the golgi apparatus membrane. Its subcellular location is the recycling endosome membrane. It localises to the early endosome membrane. The catalysed reaction is Mn(2+)(out) + Ca(2+)(in) = Mn(2+)(in) + Ca(2+)(out). The enzyme catalyses Zn(2+)(in) = Zn(2+)(out). Its function is as follows. Calcium:manganese antiporter of the plasma membrane mediating the efflux of intracellular manganese coupled to an active extracellular calcium exchange. Required for intracellular manganese homeostasis, an essential cation for the function of several enzymes, including some crucially important for the metabolism of neurotransmitters and other neuronal metabolic pathways. Manganese can also be cytotoxic and induce oxidative stress, mitochondrial dysfunction and apoptosis. Could also have an intracellular zinc ion transporter activity, directly regulating intracellular zinc ion homeostasis and more indirectly various signaling pathway and biological processes. The chain is Calcium/manganese antiporter SLC30A10 from Homo sapiens (Human).